The primary structure comprises 324 residues: Probable fructokinase-5 (324 aa).

Belongs to the carbohydrate kinase PfkB family.

It carries out the reaction D-fructose + ATP = D-fructose 6-phosphate + ADP + H(+). It functions in the pathway glycan biosynthesis; starch biosynthesis. In terms of biological role, may play an important role in maintaining the flux of carbon towards starch formation. This chain is Probable fructokinase-5, found in Arabidopsis thaliana (Mouse-ear cress).